Consider the following 164-residue polypeptide: MPDQLNSRVETCYQQAEAFFKRTFKRPVVSFQLRGQKAGVAHLHENLLRFNPQLYKENAEDFLRQTVPHEVAHLIAHQLFGGSIQPHGEEWQLIMRGVYELPPNRCHTYAVKRRSVIRYIYRCPCPDSDFPFTAQRHGMVRKGRRYLCRRCREPLVFSGETRTE.

In terms of domain architecture, SprT-like spans 13–156 (YQQAEAFFKR…LCRRCREPLV (144 aa)). Zn(2+) is bound at residue histidine 69. Residue glutamate 70 is part of the active site. Residue histidine 73 coordinates Zn(2+).

Belongs to the SprT family. Zn(2+) is required as a cofactor.

It is found in the cytoplasm. The chain is Protein SprT from Pseudomonas syringae pv. syringae (strain B728a).